The primary structure comprises 298 residues: Glutamyl-Q tRNA(Asp) synthetase (298 aa).

Residues Arg9–Ser13 and Glu45 contribute to the L-glutamate site. The short motif at Pro12–Ser22 is the 'HIGH' region element. Residues Cys101, Cys103, Tyr115, and Cys119 each coordinate Zn(2+). The L-glutamate site is built by Tyr172 and Arg190. The 'KMSKS' region signature appears at Lys228 to Gln232. Lys231 lines the ATP pocket.

It belongs to the class-I aminoacyl-tRNA synthetase family. GluQ subfamily. The cofactor is Zn(2+).

Catalyzes the tRNA-independent activation of glutamate in presence of ATP and the subsequent transfer of glutamate onto a tRNA(Asp). Glutamate is transferred on the 2-amino-5-(4,5-dihydroxy-2-cyclopenten-1-yl) moiety of the queuosine in the wobble position of the QUC anticodon. The chain is Glutamyl-Q tRNA(Asp) synthetase from Salmonella typhimurium (strain LT2 / SGSC1412 / ATCC 700720).